A 132-amino-acid chain; its full sequence is Small ribosomal subunit protein bS6 (132 aa).

A disordered region spans residues 96–132 (HAEGPSIQMQKRDERERGDRGDRPDRGDRGERGGFRR). The segment covering 105 to 132 (QKRDERERGDRGDRPDRGDRGERGGFRR) has biased composition (basic and acidic residues).

This sequence belongs to the bacterial ribosomal protein bS6 family.

In terms of biological role, binds together with bS18 to 16S ribosomal RNA. The protein is Small ribosomal subunit protein bS6 of Cereibacter sphaeroides (strain ATCC 17025 / ATH 2.4.3) (Rhodobacter sphaeroides).